A 430-amino-acid chain; its full sequence is MGKHEFLTPKAIANRIKAKGLQKLRWYCQMCQKQCRDENGFKCHCMSESHQRQMQVFGQAPDRVVEGFSEEFLDAFLTLLRRAHRHSRIAATVVYNEFIADRHHVHMNSTRWATLTEFVKFLGREGHCKVEDTPKGWFITYIDRDSEQAVKARLKRKRIKSDLAEDERQERMIARQIERAQQSMGKTNGELGDDASPDGSEGESGSEDEYSDSENDHEGQEEDAKEANKAAGKIAIALQRAVPGPKVNPLDDKPKVKFGFEEEDEVSARDKEKEELAKKKGKDAINAAEARRSALDELMKEEEKAKERSNRKDYWLCPGIVVKVMSKSLAEKGYCKQKGVVKRVIDKYVGEIEMLESKHVLRVDQDELETVIPQIGGLVRIVNGAYRGSNARLLSVDTERFCAKVQVEKGLYDGKVLKAIEYEDICKIFH.

The C2H2-type zinc finger occupies 28–50 (CQMCQKQCRDENGFKCHCMSESH). Residues 51–160 (QRQMQVFGQA…KARLKRKRIK (110 aa)) form a winged helix-turn-helix (wHTH) region. Positions 147-183 (EQAVKARLKRKRIKSDLAEDERQERMIARQIERAQQS) form a coiled coil. The Nuclear localization signal (NLS) signature appears at 155–158 (KRKR). Disordered regions lie at residues 179–230 (RAQQ…ANKA) and 261–284 (EEED…GKDA). Residues 191–224 (LGDDASPDGSEGESGSEDEYSDSENDHEGQEEDA) show a composition bias toward acidic residues. The span at 261–278 (EEEDEVSARDKEKEELAK) shows a compositional bias: basic and acidic residues. Residues 283-312 (DAINAAEARRSALDELMKEEEKAKERSNRK) adopt a coiled-coil conformation. Residues 319–370 (GIVVKVMSKSLAEKGYCKQKGVVKRVIDKYVGEIEMLESKHVLRVDQDELET) form a C-terminal subdomain A region. Residues 376–427 (GGLVRIVNGAYRGSNARLLSVDTERFCAKVQVEKGLYDGKVLKAIEYEDICK) form a C-terminal subdomain B region.

This sequence belongs to the KIN17 family.

The protein localises to the nucleus. This chain is KIN17-like protein, found in Oryza sativa subsp. japonica (Rice).